Here is a 238-residue protein sequence, read N- to C-terminus: Uridylate kinase (238 aa).

12 to 15 lines the ATP pocket; it reads KLSG. Residue Gly-54 coordinates UMP. The ATP site is built by Gly-55 and Arg-59. UMP contacts are provided by residues Asp-74 and 135 to 142; that span reads TGNPFFTT. Positions 162, 168, and 171 each coordinate ATP.

This sequence belongs to the UMP kinase family. In terms of assembly, homohexamer.

The protein resides in the cytoplasm. The catalysed reaction is UMP + ATP = UDP + ADP. Its pathway is pyrimidine metabolism; CTP biosynthesis via de novo pathway; UDP from UMP (UMPK route): step 1/1. With respect to regulation, inhibited by UTP. Catalyzes the reversible phosphorylation of UMP to UDP. This Bordetella avium (strain 197N) protein is Uridylate kinase.